A 145-amino-acid chain; its full sequence is Salt stress-induced protein (145 aa).

Positions 3–145 (LVKIGLWGGN…IDAIGIYVHP (143 aa)) constitute a Jacalin-type lectin domain. Repeat copies occupy residues 6-15 (IGLWGGNGGS) and 54-64 (IGPWGGGEGTS). The segment at 6–64 (IGLWGGNGGSAQDISVPPKKLLGVTIYSSDAIRSIAFNYIGVDGQEYAIGPWGGGEGTS) is 2 X approximate repeats, Gly-rich.

Sheaths and roots from mature plants and seedlings.

In Oryza sativa subsp. indica (Rice), this protein is Salt stress-induced protein (SALT).